Here is a 151-residue protein sequence, read N- to C-terminus: Small ribosomal subunit protein uS15 (151 aa).

Residues 1–16 (MPHRSRHKKGRSRSVR) show a composition bias toward basic residues. A disordered region spans residues 1 to 21 (MPHRSRHKKGRSRSVRPAHPT).

This sequence belongs to the universal ribosomal protein uS15 family. Part of the 30S ribosomal subunit.

The protein is Small ribosomal subunit protein uS15 of Pyrobaculum islandicum (strain DSM 4184 / JCM 9189 / GEO3).